A 183-amino-acid chain; its full sequence is Peptide deformylase (183 aa).

Cys-110 and His-153 together coordinate Fe cation. Glu-154 is a catalytic residue. Fe cation is bound at residue His-157.

The protein belongs to the polypeptide deformylase family. Fe(2+) is required as a cofactor.

The enzyme catalyses N-terminal N-formyl-L-methionyl-[peptide] + H2O = N-terminal L-methionyl-[peptide] + formate. Removes the formyl group from the N-terminal Met of newly synthesized proteins. Requires at least a dipeptide for an efficient rate of reaction. N-terminal L-methionine is a prerequisite for activity but the enzyme has broad specificity at other positions. The chain is Peptide deformylase from Shouchella clausii (strain KSM-K16) (Alkalihalobacillus clausii).